A 130-amino-acid chain; its full sequence is MSKLKLEILTPNGVIYNGEALSVTLPGEEGEFGVLAEHSSLITLLEAGVIDIEKEDKSVESVLINWGVVEVDEKKVIVLVEGAVAIRGDSESAVAKALNDAKELIESIKDNNPAIATVTARLESAAQNLL.

This sequence belongs to the ATPase epsilon chain family. In terms of assembly, F-type ATPases have 2 components, CF(1) - the catalytic core - and CF(0) - the membrane proton channel. CF(1) has five subunits: alpha(3), beta(3), gamma(1), delta(1), epsilon(1). CF(0) has three main subunits: a, b and c.

The protein resides in the cell inner membrane. Functionally, produces ATP from ADP in the presence of a proton gradient across the membrane. The polypeptide is ATP synthase epsilon chain (Sulfurimonas denitrificans (strain ATCC 33889 / DSM 1251) (Thiomicrospira denitrificans (strain ATCC 33889 / DSM 1251))).